The following is a 177-amino-acid chain: Large ribosomal subunit protein uL10 (177 aa).

Belongs to the universal ribosomal protein uL10 family. In terms of assembly, part of the ribosomal stalk of the 50S ribosomal subunit. The N-terminus interacts with L11 and the large rRNA to form the base of the stalk. The C-terminus forms an elongated spine to which L12 dimers bind in a sequential fashion forming a multimeric L10(L12)X complex.

Forms part of the ribosomal stalk, playing a central role in the interaction of the ribosome with GTP-bound translation factors. This is Large ribosomal subunit protein uL10 from Thermoanaerobacter sp. (strain X514).